The chain runs to 454 residues: Tubulin alpha-A chain (454 aa).

Positions 12, 72, 141, 145, 146, 180, 207, and 229 each coordinate GTP. Aspartate 72 provides a ligand contact to Mg(2+). The active site involves glutamate 255.

It belongs to the tubulin family. In terms of assembly, dimer of alpha and beta chains. A typical microtubule is a hollow water-filled tube with an outer diameter of 25 nm and an inner diameter of 15 nM. Alpha-beta heterodimers associate head-to-tail to form protofilaments running lengthwise along the microtubule wall with the beta-tubulin subunit facing the microtubule plus end conferring a structural polarity. Microtubules usually have 13 protofilaments but different protofilament numbers can be found in some organisms and specialized cells. Requires Mg(2+) as cofactor.

Its subcellular location is the cytoplasm. The protein resides in the cytoskeleton. The enzyme catalyses GTP + H2O = GDP + phosphate + H(+). In terms of biological role, tubulin is the major constituent of microtubules, a cylinder consisting of laterally associated linear protofilaments composed of alpha- and beta-tubulin heterodimers. Microtubules grow by the addition of GTP-tubulin dimers to the microtubule end, where a stabilizing cap forms. Below the cap, tubulin dimers are in GDP-bound state, owing to GTPase activity of alpha-tubulin. The chain is Tubulin alpha-A chain (tba-1) from Neurospora crassa (strain ATCC 24698 / 74-OR23-1A / CBS 708.71 / DSM 1257 / FGSC 987).